The sequence spans 172 residues: R-phycocyanin-2 beta chain (172 aa).

Position 72 is an N4-methylasparagine (Asn72). (2R,3E)-phycocyanobilin is bound at residue Cys82. Cys153 serves as a coordination point for (2R,3E)-phycoerythrobilin.

This sequence belongs to the phycobiliprotein family. Heterodimer of an alpha and a beta chain. Post-translationally, contains two covalently linked bilin chromophores.

The protein resides in the cellular thylakoid membrane. Functionally, light-harvesting photosynthetic bile pigment-protein from the phycobiliprotein complex. This chain is R-phycocyanin-2 beta chain (rpcB), found in Synechococcus sp. (strain WH8020).